We begin with the raw amino-acid sequence, 98 residues long: NADH-ubiquinone oxidoreductase chain 4L (98 aa).

The next 3 helical transmembrane spans lie at 1-21, 29-49, and 61-81; these read MSMV…GLLM, SLLC…MVVL, and IILL…LVMV.

Belongs to the complex I subunit 4L family. In terms of assembly, core subunit of respiratory chain NADH dehydrogenase (Complex I) which is composed of 45 different subunits.

The protein localises to the mitochondrion inner membrane. It carries out the reaction a ubiquinone + NADH + 5 H(+)(in) = a ubiquinol + NAD(+) + 4 H(+)(out). In terms of biological role, core subunit of the mitochondrial membrane respiratory chain NADH dehydrogenase (Complex I) which catalyzes electron transfer from NADH through the respiratory chain, using ubiquinone as an electron acceptor. Part of the enzyme membrane arm which is embedded in the lipid bilayer and involved in proton translocation. The sequence is that of NADH-ubiquinone oxidoreductase chain 4L (MT-ND4L) from Acinonyx jubatus (Cheetah).